Consider the following 377-residue polypeptide: Phosphoserine aminotransferase (377 aa).

Residue arginine 43 participates in L-glutamate binding. Pyridoxal 5'-phosphate contacts are provided by tryptophan 105, threonine 164, aspartate 189, and glutamine 212. N6-(pyridoxal phosphate)lysine is present on lysine 213. 254–255 (NT) provides a ligand contact to pyridoxal 5'-phosphate.

It belongs to the class-V pyridoxal-phosphate-dependent aminotransferase family. SerC subfamily. As to quaternary structure, homodimer. It depends on pyridoxal 5'-phosphate as a cofactor.

Its subcellular location is the cytoplasm. The catalysed reaction is O-phospho-L-serine + 2-oxoglutarate = 3-phosphooxypyruvate + L-glutamate. It carries out the reaction 4-(phosphooxy)-L-threonine + 2-oxoglutarate = (R)-3-hydroxy-2-oxo-4-phosphooxybutanoate + L-glutamate. It participates in amino-acid biosynthesis; L-serine biosynthesis; L-serine from 3-phospho-D-glycerate: step 2/3. It functions in the pathway cofactor biosynthesis; pyridoxine 5'-phosphate biosynthesis; pyridoxine 5'-phosphate from D-erythrose 4-phosphate: step 3/5. Functionally, catalyzes the reversible conversion of 3-phosphohydroxypyruvate to phosphoserine and of 3-hydroxy-2-oxo-4-phosphonooxybutanoate to phosphohydroxythreonine. The sequence is that of Phosphoserine aminotransferase from Bordetella bronchiseptica (strain ATCC BAA-588 / NCTC 13252 / RB50) (Alcaligenes bronchisepticus).